Consider the following 637-residue polypeptide: 5-hmdU DNA kinase (637 aa).

The tract at residues 249–269 (AEKGVKRGKKGRKTSPVAKTL) is disordered.

Belongs to the thymidylate kinase family. 5-hmdU DNA kinase subfamily.

The enzyme catalyses 5-hydroxymethyl-dUMP in DNA + ATP = 5-phosphomethyl-dUMP in DNA + ADP + H(+). Phosphorylates 5-hydroxymethyluracil (5hmdU) into 5-phosphomethyl-2'-deoxyuridine (5- PmdU) on DNA as a step in the pathway leading to thymidine hypermodifications in the viral genome. The phosphate is added internally to the DNA polymer. As a final result of the pathway of hypermodification, alpha-glutamylthymidine (YdTMP) substitutes for about 20% of the thymidines in the viral DNA, the 80% left are dTMP. These modifications probably prevent degradation of viral genome by the host restriction-modification antiviral defense system. This chain is 5-hmdU DNA kinase, found in Bacillus phage SP10 (Bacillus phage SP-10).